A 504-amino-acid polypeptide reads, in one-letter code: Lysine--tRNA ligase (504 aa).

Mg(2+) is bound by residues Glu411 and Glu418.

The protein belongs to the class-II aminoacyl-tRNA synthetase family. As to quaternary structure, homodimer. Mg(2+) is required as a cofactor.

Its subcellular location is the cytoplasm. It carries out the reaction tRNA(Lys) + L-lysine + ATP = L-lysyl-tRNA(Lys) + AMP + diphosphate. The polypeptide is Lysine--tRNA ligase (Clostridium botulinum (strain Loch Maree / Type A3)).